Reading from the N-terminus, the 413-residue chain is Alpha-1-antiproteinase (413 aa).

An N-terminal signal peptide occupies residues 1–24 (MTPSISWRLLLLAGLCCLVPSYLA). Residue Ser33 is modified to Phosphoserine. N-linked (GlcNAc...) asparagine glycosylation is found at Asn64, Asn101, and Asn265. Positions 368–387 (ATTIVEAVFMSLPPILHFNH) are RCL. Phosphoserine is present on Ser378.

This sequence belongs to the serpin family. In terms of assembly, interacts with CELA2A. Interacts with ERGIC3 and LMAN1/ERGIC53. Interacts with PRSS1/Trypsin.

Its subcellular location is the secreted. Functionally, inhibitor of serine proteases. The primary target is elastase, but also has a moderate affinity for plasmin and thrombin. This chain is Alpha-1-antiproteinase (Serpina1), found in Mus saxicola (Brown spiny mouse).